Consider the following 76-residue polypeptide: Sec-independent protein translocase protein TatA (76 aa).

The chain crosses the membrane as a helical span at residues 1 to 21 (MGSFSIWHWLVVLAIVVLVFG). The segment at 41–76 (EGMKGAEEESTPPPPAQQVTGHSIKSEIEEKDQTKV) is disordered. Basic and acidic residues predominate over residues 64–76 (IKSEIEEKDQTKV).

This sequence belongs to the TatA/E family. As to quaternary structure, the Tat system comprises two distinct complexes: a TatABC complex, containing multiple copies of TatA, TatB and TatC subunits, and a separate TatA complex, containing only TatA subunits. Substrates initially bind to the TatABC complex, which probably triggers association of the separate TatA complex to form the active translocon.

It localises to the cell inner membrane. Its function is as follows. Part of the twin-arginine translocation (Tat) system that transports large folded proteins containing a characteristic twin-arginine motif in their signal peptide across membranes. TatA could form the protein-conducting channel of the Tat system. The sequence is that of Sec-independent protein translocase protein TatA from Nitrosomonas europaea (strain ATCC 19718 / CIP 103999 / KCTC 2705 / NBRC 14298).